The sequence spans 83 residues: Small ribosomal subunit protein bS16 (83 aa).

The protein belongs to the bacterial ribosomal protein bS16 family.

This is Small ribosomal subunit protein bS16 from Azotobacter vinelandii (strain DJ / ATCC BAA-1303).